The primary structure comprises 113 residues: Putative membrane protein insertion efficiency factor (113 aa).

This sequence belongs to the UPF0161 family.

Its subcellular location is the cell inner membrane. In terms of biological role, could be involved in insertion of integral membrane proteins into the membrane. The chain is Putative membrane protein insertion efficiency factor from Campylobacter jejuni subsp. doylei (strain ATCC BAA-1458 / RM4099 / 269.97).